The primary structure comprises 467 residues: FK506-binding protein 4 (467 aa).

Disordered stretches follow at residues 64-163 (KATG…GDDD) and 208-357 (GNFV…KPTS). Composition is skewed to acidic residues over residues 71-80 (DDDDEEEDEY), 147-163 (SDEEESDEESDCCGDDD), and 213-254 (PEDD…DELD). Composition is skewed to basic and acidic residues over residues 271–287 (APKLVDTSKKGKKRPAE) and 312–332 (QKVEEAKKEEPKKETKSDKKV). The PPIase FKBP-type domain occupies 381 to 467 (GDRVGMRYIG…IFDVKLLEIK (87 aa)).

It belongs to the FKBP-type PPIase family. FKBP3/4 subfamily. In terms of assembly, binds to histones H3 and H4.

Its subcellular location is the nucleus. The enzyme catalyses [protein]-peptidylproline (omega=180) = [protein]-peptidylproline (omega=0). Its activity is regulated as follows. Inhibited by both FK506 and rapamycin. PPIase that acts as a histone chaperone. Histone proline isomerase that increases the rate of cis-trans isomerization at prolines on the histone H3 N-terminal tail. Proline isomerization influences H3 methylation thereby regulating gene expression. The sequence is that of FK506-binding protein 4 (fkr-4) from Neurospora crassa (strain ATCC 24698 / 74-OR23-1A / CBS 708.71 / DSM 1257 / FGSC 987).